Consider the following 561-residue polypeptide: Proline--tRNA ligase (561 aa).

The protein belongs to the class-II aminoacyl-tRNA synthetase family. ProS type 1 subfamily. Homodimer.

Its subcellular location is the cytoplasm. It catalyses the reaction tRNA(Pro) + L-proline + ATP = L-prolyl-tRNA(Pro) + AMP + diphosphate. In terms of biological role, catalyzes the attachment of proline to tRNA(Pro) in a two-step reaction: proline is first activated by ATP to form Pro-AMP and then transferred to the acceptor end of tRNA(Pro). As ProRS can inadvertently accommodate and process non-cognate amino acids such as alanine and cysteine, to avoid such errors it has two additional distinct editing activities against alanine. One activity is designated as 'pretransfer' editing and involves the tRNA(Pro)-independent hydrolysis of activated Ala-AMP. The other activity is designated 'posttransfer' editing and involves deacylation of mischarged Ala-tRNA(Pro). The misacylated Cys-tRNA(Pro) is not edited by ProRS. The sequence is that of Proline--tRNA ligase from Thermosipho africanus (strain TCF52B).